The chain runs to 131 residues: M-zodatoxin-Lt8o (131 aa).

The signal sequence occupies residues 1-20 (MKYFVVALALVAAFACIAES). The propeptide occupies 21-60 (KPAESEHELAEVEEENELADLEDAVWLEHLADLSDLEEAR).

This sequence belongs to the cationic peptide 06 (cytoinsectotoxin) family. Expressed by the venom gland.

Its subcellular location is the secreted. Functionally, insecticidal, cytolytic and antimicrobial peptide. Forms voltage-dependent, ion-permeable channels in membranes. At high concentration causes cell membrane lysis. This Lachesana tarabaevi (Spider) protein is M-zodatoxin-Lt8o (cit 1-14).